The primary structure comprises 389 residues: Cytochrome f (389 aa).

An N-terminal signal peptide occupies residues 1–42 (MTTFFISKVNGPVNKSLIWLKIHIYEFFLLKFMLLFPPTVCS). Heme is bound by residues Tyr105, Cys125, Cys128, and His129. Residues 355–375 (LQALIVFFIFVILTQLFLVLK) traverse the membrane as a helical segment.

Belongs to the cytochrome f family. In terms of assembly, the 4 large subunits of the cytochrome b6-f complex are cytochrome b6, subunit IV (17 kDa polypeptide, petD), cytochrome f and the Rieske protein, while the 4 small subunits are PetG, PetL, PetM and PetN. The complex functions as a dimer. Heme is required as a cofactor.

Its subcellular location is the plastid. It is found in the chloroplast thylakoid membrane. Its function is as follows. Component of the cytochrome b6-f complex, which mediates electron transfer between photosystem II (PSII) and photosystem I (PSI), cyclic electron flow around PSI, and state transitions. The chain is Cytochrome f from Pleurastrum terricola (Filamentous green alga).